We begin with the raw amino-acid sequence, 324 residues long: Fructose-1,6-bisphosphatase class 1 (324 aa).

Mg(2+)-binding residues include Glu-88, Asp-107, Leu-109, and Asp-110. Substrate contacts are provided by residues 110-113 (DGSS), Asn-199, and Lys-265. Glu-271 contacts Mg(2+).

This sequence belongs to the FBPase class 1 family. Homotetramer. Mg(2+) is required as a cofactor.

It is found in the cytoplasm. It catalyses the reaction beta-D-fructose 1,6-bisphosphate + H2O = beta-D-fructose 6-phosphate + phosphate. The protein operates within carbohydrate biosynthesis; gluconeogenesis. This Neisseria meningitidis serogroup B (strain ATCC BAA-335 / MC58) protein is Fructose-1,6-bisphosphatase class 1.